A 1001-amino-acid chain; its full sequence is Ankyrin repeat domain-containing protein 35 (1001 aa).

6 ANK repeats span residues 53–82 (NGQS…DINS), 86–115 (DGST…NEDA), 119–148 (ENRS…FLDV), 152–181 (DGRT…RVNV), 185–214 (NDKS…DAGA), and 218–247 (TGHD…RRRR). Disordered regions lie at residues 256-296 (PDLA…PCSE), 352-482 (PRAS…VAEP), and 559-601 (PEVP…ALGG). The span at 281–295 (PEEEQEEKEDEDPCS) shows a compositional bias: acidic residues. The stretch at 295-344 (SEEWRWKYEEERRKVVRLEQELVQKTEECKTQAAAYLDLENQIREQAQEL) forms a coiled coil. Over residues 402 to 422 (KKAEDSAPGKIQYEVHGRSQP) the composition is skewed to basic and acidic residues. Residues 423–434 (EEQGPPQSPASE) show a composition bias toward low complexity. Residues 440 to 450 (TGQQLTTNGAQ) are compositionally biased toward polar residues. Residues 579 to 588 (KQDEEKEKRV) are compositionally biased toward basic and acidic residues. 3 coiled-coil regions span residues 610 to 696 (KGQL…LLAS), 733 to 810 (ISTL…IGKL), and 851 to 968 (QELK…HEEI). The tract at residues 879–902 (RRSGDLAAQAAEQERQASEMRGRS) is disordered. Over residues 890 to 902 (EQERQASEMRGRS) the composition is skewed to basic and acidic residues.

In Homo sapiens (Human), this protein is Ankyrin repeat domain-containing protein 35 (ANKRD35).